Reading from the N-terminus, the 298-residue chain is Arginine/serine-rich protein 1 (298 aa).

Residues Met-1 to Gln-135 are disordered. Position 17 is a phosphoserine (Ser-17). Residues Ser-23 to Ser-36 are compositionally biased toward low complexity. Residues Ser-60–Arg-105 show a composition bias toward basic residues. 2 positions are modified to phosphoserine: Ser-118 and Ser-120. The segment covering Ser-124 to Gln-135 has biased composition (basic residues). The residue at position 145 (Arg-145) is an Omega-N-methylarginine. Disordered regions lie at residues Arg-161 to Arg-181 and Ala-218 to Val-298. Over residues Ser-219–Gly-228 the composition is skewed to polar residues. Residues Lys-230–Ser-246 are compositionally biased toward basic and acidic residues. Residues Glu-247–Thr-271 are compositionally biased toward polar residues. Basic and acidic residues predominate over residues Ala-274 to Lys-289. Ser-282 is modified (phosphoserine).

Belongs to the RSRP family. Phosphorylated. Phosphorylation at Ser-118 and Ser-120 mediates the interaction with spliceosome proteins.

It is found in the nucleus. Its function is as follows. Probably acts as a spliceosomal factor that contributes to spliceosome assembly and regulates the isoform switching of proteins such as PARP6. The polypeptide is Arginine/serine-rich protein 1 (Rsrp1) (Mus musculus (Mouse)).